A 161-amino-acid polypeptide reads, in one-letter code: Ribosome maturation factor RimP (161 aa).

The protein belongs to the RimP family.

It is found in the cytoplasm. Its function is as follows. Required for maturation of 30S ribosomal subunits. This chain is Ribosome maturation factor RimP, found in Rickettsia felis (strain ATCC VR-1525 / URRWXCal2) (Rickettsia azadi).